The following is a 221-amino-acid chain: Protein FixW (221 aa).

A Thioredoxin domain is found at 5-156 (LNLGSPAPPI…LPKVIDGNWR (152 aa)). Cys43 and Cys46 form a disulfide bridge.

This sequence belongs to the thioredoxin family.

In Rhizobium leguminosarum, this protein is Protein FixW (fixW).